The chain runs to 453 residues: Aminodeoxychorismate synthase component 1 (453 aa).

L-tryptophan-binding positions include serine 36, 43–46 (YSRF), and 240–242 (PFS). Glutamate 258 functions as the Proton donor in the catalytic mechanism. Lysine 274 acts as the N6-(4-deoxychorismate)-lysine intermediate in catalysis.

This sequence belongs to the anthranilate synthase component I family. Monomer. Heterodimer consisting of two non-identical subunits: a glutamine amidotransferase subunit (PabA) and a aminodeoxychorismate synthase subunit (PabB). Requires Mg(2+) as cofactor.

The enzyme catalyses chorismate + L-glutamine = 4-amino-4-deoxychorismate + L-glutamate. It functions in the pathway cofactor biosynthesis; tetrahydrofolate biosynthesis; 4-aminobenzoate from chorismate: step 1/2. With respect to regulation, inhibited by 6-diazo-5-oxo-L-norleucine (DON). The inhibition is competitive with glutamine but uncompetitive with chorismate. Also inhibited by 2-fluorochorismate. Functionally, part of a heterodimeric complex that catalyzes the two-step biosynthesis of 4-amino-4-deoxychorismate (ADC), a precursor of p-aminobenzoate (PABA) and tetrahydrofolate. In the first step, a glutamine amidotransferase (PabA) generates ammonia as a substrate that, along with chorismate, is used in the second step, catalyzed by aminodeoxychorismate synthase (PabB) to produce ADC. PabB, in the absence of PabA, can catalyze the formation of ADC in the presence of exogenous ammonia. This Escherichia coli (strain K12) protein is Aminodeoxychorismate synthase component 1 (pabB).